Consider the following 543-residue polypeptide: Chaperonin GroEL 1 (543 aa).

Residues T29–P32, D86–T90, G413, N479–A481, and D495 each bind ATP.

It belongs to the chaperonin (HSP60) family. In terms of assembly, forms a cylinder of 14 subunits composed of two heptameric rings stacked back-to-back. Interacts with the co-chaperonin GroES.

It is found in the cytoplasm. It catalyses the reaction ATP + H2O + a folded polypeptide = ADP + phosphate + an unfolded polypeptide.. Functionally, together with its co-chaperonin GroES, plays an essential role in assisting protein folding. The GroEL-GroES system forms a nano-cage that allows encapsulation of the non-native substrate proteins and provides a physical environment optimized to promote and accelerate protein folding. The protein is Chaperonin GroEL 1 of Prochlorococcus marinus (strain NATL2A).